A 123-amino-acid chain; its full sequence is Large ribosomal subunit protein uL29 (123 aa).

Lys19 carries the N6-acetyllysine modification. Residue Lys25 forms a Glycyl lysine isopeptide (Lys-Gly) (interchain with G-Cter in SUMO2) linkage. Position 29 is a phosphoserine (Ser29). The residue at position 43 (Lys43) is an N6-acetyllysine. Positions 95–114 (LNKHEENLKTKKQQRKERLY) are disordered.

The protein belongs to the universal ribosomal protein uL29 family. In terms of assembly, component of the large ribosomal subunit.

It localises to the cytoplasm. Component of the large ribosomal subunit. The ribosome is a large ribonucleoprotein complex responsible for the synthesis of proteins in the cell. The sequence is that of Large ribosomal subunit protein uL29 (RPL35) from Bos taurus (Bovine).